The following is a 519-amino-acid chain: Membrane protein insertase YidC (519 aa).

Helical transmembrane passes span 6–26 (ILFVTLSAFTVFIWYFFFAQP), 298–318 (VDFGFFGFLGKIAFSILVFFY), 324–344 (YGWAIIMLTTIIQILVLPLTL), 390–410 (LGGCLPMLLQLPIFWAFFTML), 434–454 (FMQFGSFNLNLLPLMMGIGMF), and 471–491 (IMYIMPVIFTFMFWSFPSGLV).

This sequence belongs to the OXA1/ALB3/YidC family. Type 1 subfamily. As to quaternary structure, interacts with the Sec translocase complex via SecD. Specifically interacts with transmembrane segments of nascent integral membrane proteins during membrane integration.

Its subcellular location is the cell inner membrane. In terms of biological role, required for the insertion and/or proper folding and/or complex formation of integral membrane proteins into the membrane. Involved in integration of membrane proteins that insert both dependently and independently of the Sec translocase complex, as well as at least some lipoproteins. Aids folding of multispanning membrane proteins. The polypeptide is Membrane protein insertase YidC (Endomicrobium trichonymphae).